The following is a 491-amino-acid chain: Probable glycine dehydrogenase (decarboxylating) subunit 2 (491 aa).

Lys-264 carries the post-translational modification N6-(pyridoxal phosphate)lysine.

This sequence belongs to the GcvP family. C-terminal subunit subfamily. The glycine cleavage system is composed of four proteins: P, T, L and H. In this organism, the P 'protein' is a heterodimer of two subunits. The cofactor is pyridoxal 5'-phosphate.

The catalysed reaction is N(6)-[(R)-lipoyl]-L-lysyl-[glycine-cleavage complex H protein] + glycine + H(+) = N(6)-[(R)-S(8)-aminomethyldihydrolipoyl]-L-lysyl-[glycine-cleavage complex H protein] + CO2. The glycine cleavage system catalyzes the degradation of glycine. The P protein binds the alpha-amino group of glycine through its pyridoxal phosphate cofactor; CO(2) is released and the remaining methylamine moiety is then transferred to the lipoamide cofactor of the H protein. This is Probable glycine dehydrogenase (decarboxylating) subunit 2 from Coxiella burnetii (strain CbuK_Q154) (Coxiella burnetii (strain Q154)).